A 261-amino-acid chain; its full sequence is tRNA pseudouridine synthase A (261 aa).

D51 serves as the catalytic Nucleophile. A substrate-binding site is contributed by Y109.

This sequence belongs to the tRNA pseudouridine synthase TruA family. As to quaternary structure, homodimer.

The catalysed reaction is uridine(38/39/40) in tRNA = pseudouridine(38/39/40) in tRNA. In terms of biological role, formation of pseudouridine at positions 38, 39 and 40 in the anticodon stem and loop of transfer RNAs. The protein is tRNA pseudouridine synthase A of Shewanella loihica (strain ATCC BAA-1088 / PV-4).